The chain runs to 222 residues: Glutathione S-transferase A1 (222 aa).

Methionine 1 is subject to N-acetylmethionine. Alanine 2 is modified (N-acetylalanine; in Glutathione S-transferase A1, N-terminally processed). In terms of domain architecture, GST N-terminal spans 3-83; it reads GKPTLHYFNG…YIATKYNLYG (81 aa). At lysine 4 the chain carries N6-succinyllysine. Glutathione is bound by residues tyrosine 9, lysine 45, 54–55, and 67–68; these read QV and QT. The 124-residue stretch at 85–208 folds into the GST C-terminal domain; the sequence is DMKERALIDM…QPGSQRKPPT (124 aa).

This sequence belongs to the GST superfamily. Alpha family. Homodimer or heterodimer of GSTA1 and GSTA2. In terms of tissue distribution, expressed in corpus luteum, adrenal gland, testis, liver, lung, thyroid and kidney.

The protein resides in the cytoplasm. The enzyme catalyses RX + glutathione = an S-substituted glutathione + a halide anion + H(+). It carries out the reaction prostaglandin A2 + glutathione = prostaglandin A2-S-(R)-glutathione. The catalysed reaction is prostaglandin J2 + glutathione = prostaglandin J2-S-(R)-glutathione. It catalyses the reaction (13S)-hydroperoxy-(9Z,11E)-octadecadienoate + 2 glutathione = (13S)-hydroxy-(9Z,11E)-octadecadienoate + glutathione disulfide + H2O. The enzyme catalyses androst-5-ene-3,17-dione = androst-4-ene-3,17-dione. Functionally, glutathione S-transferase that catalyzes the nucleophilic attack of the sulfur atom of glutathione on the electrophilic groups of a wide range of exogenous and endogenous compounds. Involved in the formation of glutathione conjugates of both prostaglandin A2 (PGA2) and prostaglandin J2 (PGJ2). It also catalyzes the isomerization of D5-androstene-3,17-dione (AD) into D4-androstene-3,17-dione and may therefore play an important role in hormone biosynthesis. Through its glutathione-dependent peroxidase activity toward the fatty acid hydroperoxide (13S)-hydroperoxy-(9Z,11E)-octadecadienoate/13-HPODE it is also involved in the metabolism of oxidized linoleic acid. The chain is Glutathione S-transferase A1 (GSTA1) from Bos taurus (Bovine).